We begin with the raw amino-acid sequence, 259 residues long: Type III pantothenate kinase (259 aa).

Position 6–13 (6–13) interacts with ATP; the sequence is DCGNTNTV. 107-110 lines the substrate pocket; it reads GPDR. Catalysis depends on Asp109, which acts as the Proton acceptor. Asp129 provides a ligand contact to K(+). Thr132 provides a ligand contact to ATP. Thr184 is a binding site for substrate.

It belongs to the type III pantothenate kinase family. As to quaternary structure, homodimer. It depends on NH4(+) as a cofactor. Requires K(+) as cofactor.

It is found in the cytoplasm. The enzyme catalyses (R)-pantothenate + ATP = (R)-4'-phosphopantothenate + ADP + H(+). It functions in the pathway cofactor biosynthesis; coenzyme A biosynthesis; CoA from (R)-pantothenate: step 1/5. Functionally, catalyzes the phosphorylation of pantothenate (Pan), the first step in CoA biosynthesis. This Ruegeria pomeroyi (strain ATCC 700808 / DSM 15171 / DSS-3) (Silicibacter pomeroyi) protein is Type III pantothenate kinase.